The following is a 306-amino-acid chain: Natural cytotoxicity triggering receptor 1 (306 aa).

The N-terminal stretch at 1–21 is a signal peptide; that stretch reads MSSTLRALLCLGLCLSQRISA. Topologically, residues 22 to 257 are extracellular; that stretch reads PKQTLPKPII…WDHTAQNLLR (236 aa). Ig-like domains follow at residues 42-100 and 137-192; these read EKQA…SCIY and GEKV…RCFG. Disulfide bonds link C49–C98 and C144–C190. N-linked (GlcNAc...) asparagine glycosylation is present at N216. A helical transmembrane segment spans residues 258–278; it reads MGLAFLVLVALVCLLVEDWLS. Topologically, residues 279-306 are cytoplasmic; the sequence is RKRTREQASRASTWEGRRRLNKHKDSEE.

The protein belongs to the natural cytotoxicity receptor (NCR) family. As to quaternary structure, interacts with CD3Z and FCER1G. As to expression, expressed in NK cells.

It localises to the cell membrane. In terms of biological role, cytotoxicity-activating receptor that may contribute to the increased efficiency of activated natural killer (NK) cells to mediate tumor cell lysis. The sequence is that of Natural cytotoxicity triggering receptor 1 (NCR1) from Macaca fascicularis (Crab-eating macaque).